The sequence spans 220 residues: uncharacterized protein (220 aa).

Positions 165–202 form a coiled coil; that stretch reads DKYEDLISDYNKIMEKYREVIKSEIEKYKALSKRKNDI.

This is an uncharacterized protein from Pasteurella multocida (strain Pm70).